A 340-amino-acid chain; its full sequence is Pre-rRNA-processing protein esf-2 (340 aa).

Composition is skewed to basic and acidic residues over residues 1–12 (MPEDDVRNKFLD) and 19–32 (DAGH…DFQK). A disordered region spans residues 1-103 (MPEDDVRNKF…KSVLASDLPG (103 aa)). Residues 44–64 (DDEDSEADDFTDAEEEHDQDD) show a composition bias toward acidic residues. The segment covering 65-95 (AESKDAPAKDGQETTDGKEKKDGKKEKEKKS) has biased composition (basic and acidic residues). The RRM domain maps to 124 to 214 (GVVYISRVPP…KKGSYYRDDI (91 aa)). Residues 272 to 329 (AKKASKGSKAGGEGAAQVTESTIPSAAATTTTTTNDDKRRTFKQIPLAKKRKLDETQP) are disordered.

Belongs to the ESF2/ABP1 family.

It localises to the nucleus. The protein resides in the nucleolus. In terms of biological role, involved in the small subunit (SSU) processome assembly and function, and in the 18S rRNA synthesis. Required for the early cleavages at sites A0, A1 and A2. The chain is Pre-rRNA-processing protein esf-2 (esf-2) from Neurospora crassa (strain ATCC 24698 / 74-OR23-1A / CBS 708.71 / DSM 1257 / FGSC 987).